The sequence spans 391 residues: 1-deoxy-D-xylulose 5-phosphate reductoisomerase (391 aa).

NADPH is bound at residue Asn109. Residue Lys110 coordinates 1-deoxy-D-xylulose 5-phosphate. Glu111 provides a ligand contact to NADPH. Asp135 serves as a coordination point for Mn(2+). 4 residues coordinate 1-deoxy-D-xylulose 5-phosphate: Ser136, Glu137, Ser171, and His194. Mn(2+) is bound at residue Glu137. Residue Gly200 participates in NADPH binding. 4 residues coordinate 1-deoxy-D-xylulose 5-phosphate: Ser207, Asn212, Arg213, and Glu216. Glu216 lines the Mn(2+) pocket.

The protein belongs to the DXR family. As to quaternary structure, homodimer. Requires Mg(2+) as cofactor. Mn(2+) is required as a cofactor.

The catalysed reaction is 2-C-methyl-D-erythritol 4-phosphate + NADP(+) = 1-deoxy-D-xylulose 5-phosphate + NADPH + H(+). It functions in the pathway isoprenoid biosynthesis; isopentenyl diphosphate biosynthesis via DXP pathway; isopentenyl diphosphate from 1-deoxy-D-xylulose 5-phosphate: step 1/6. In terms of biological role, catalyzes the NADPH-dependent rearrangement and reduction of 1-deoxy-D-xylulose-5-phosphate (DXP) to 2-C-methyl-D-erythritol 4-phosphate (MEP). The chain is 1-deoxy-D-xylulose 5-phosphate reductoisomerase from Blochmanniella floridana.